Here is a 351-residue protein sequence, read N- to C-terminus: Probable glucuronosyltransferase Os10g0205300 (351 aa).

The Cytoplasmic segment spans residues 1 to 11 (MAAPPCPPRRP). The helical; Signal-anchor for type II membrane protein transmembrane segment at 12–32 (ISAPCFLLCFLLGFVAGLFPF) threads the bilayer. Residues 33-351 (AHRHLHLDLH…PLKKEARPLL (319 aa)) are Lumenal-facing. Residues 138–169 (SSPVPDAPQDRPRRRGRRQDRPAVDSRARQRN) form a disordered region. The segment covering 156–169 (QDRPAVDSRARQRN) has biased composition (basic and acidic residues). A glycan (N-linked (GlcNAc...) asparagine) is linked at N259.

The protein belongs to the glycosyltransferase 43 family.

It is found in the golgi apparatus membrane. In terms of biological role, involved in the synthesis of glucuronoxylan hemicellulose in secondary cell walls. This is Probable glucuronosyltransferase Os10g0205300 from Oryza sativa subsp. japonica (Rice).